The primary structure comprises 229 residues: Sugar fermentation stimulation protein homolog (229 aa).

This sequence belongs to the SfsA family.

The protein is Sugar fermentation stimulation protein homolog of Clostridium novyi (strain NT).